Reading from the N-terminus, the 50-residue chain is Protein hunchback (50 aa).

C2H2-type zinc fingers lie at residues His1–His5, Phe11–His33, and Tyr39–Tyr50.

The protein belongs to the hunchback C2H2-type zinc-finger protein family.

The protein resides in the nucleus. Gap class segmentation protein that controls development of head structures. In Schultesia lampyridiformis (Firefly mimic roach), this protein is Protein hunchback (hb).